Reading from the N-terminus, the 478-residue chain is Pyruvate kinase (478 aa).

R36 is a substrate binding site. K(+) is bound by residues N38, S40, and D70. 38-41 (NFSH) is a binding site for ATP. Residues R77 and K160 each contribute to the ATP site. E225 is a binding site for Mg(2+). Substrate-binding residues include G251, D252, and T284. D252 lines the Mg(2+) pocket.

This sequence belongs to the pyruvate kinase family. In terms of assembly, homotetramer. Mg(2+) serves as cofactor. Requires K(+) as cofactor.

The catalysed reaction is pyruvate + ATP = phosphoenolpyruvate + ADP + H(+). It functions in the pathway carbohydrate degradation; glycolysis; pyruvate from D-glyceraldehyde 3-phosphate: step 5/5. Its activity is regulated as follows. Allosterically activated by AMP and by several sugar phosphates. Belongs to type II PK. This is Pyruvate kinase (pykA) from Haemophilus influenzae (strain ATCC 51907 / DSM 11121 / KW20 / Rd).